A 440-amino-acid chain; its full sequence is FAD-dependent monooxygenase FVEG_08293 (440 aa).

Residues 7-26 (EFNVAIVGAGVAGLALAMAL) form a helical membrane-spanning segment. Residues Glu-37 and Gly-50 each contribute to the FAD site. An N-linked (GlcNAc...) asparagine glycan is attached at Asn-77. Residue Arg-122 participates in FAD binding. Residues Arg-203 and Tyr-235 contribute to the active site. Residues Asp-317 and Ala-330 each contribute to the FAD site.

Belongs to the paxM FAD-dependent monooxygenase family. Requires FAD as cofactor.

The protein resides in the membrane. Its function is as follows. FAD-dependent monooxygenase; part of the Fusarium detoxification of benzoxazolinone cluster 1 (FDB1) involved in the degradation of benzoxazolinones produced by the host plant. Maize, wheat, and rye produce the 2 benzoxazinone phytoanticipins 2,4-dihy-droxy-7-methoxy-1,4-benzoxazin-3-one (DIMBOA) and 2,4-dihydroxy-1,4-benzoxazin-3-one (DIBOA) that, due to their inherent instability once released, spontaneously degrade to the more stable corresponding benzoxazolinones, 6-methoxy-2-benzoxazolinone (MBOA) and 2-benzoxazolinone (BOA), respectively. The first step in the detoxification of benzoxazolinones involves the hydrolysis of the cyclic ester bond of benzoxazolinones by the FDB1 cluster gamma-lactamase MBL1 to aminophenols. MBL1 is able to convert BOA into 2-aminophenol (2-AP), as well as MBOA into 5-methoxy-2-aminophenol (2-AMP). The FDB2 cluster N-malonyltransferase FDB2/NAT1 then metabolizes aminophenols via N-malonylation to non-toxic malonamic acids. FDB2/NAT1 converts 2-AP into N-(2-hydroxyphenyl) malonamic acid (HPMA) and 2-AMP into N-(2-hydroxy-4-methoxyphenyl) malonamic acid (HMPMA). The duplicated dienlactone hydrolases DLH1 and DLH2 may provide redundant function for hydrolyzing the lactone moiety in the BOA molecule. The roles of the amidases an other enzymes encoded by the 2 FDB clusters have not been identified so far. This chain is FAD-dependent monooxygenase FVEG_08293, found in Gibberella moniliformis (strain M3125 / FGSC 7600) (Maize ear and stalk rot fungus).